The following is a 311-amino-acid chain: Dihydroorotate dehydrogenase B (NAD(+)), catalytic subunit (311 aa).

FMN is bound by residues Ser24 and 48-49 (KA). Residues Lys48 and 72–76 (NAIGL) each bind substrate. Positions 104 and 132 each coordinate FMN. Asn132 serves as a coordination point for substrate. Catalysis depends on Cys135, which acts as the Nucleophile. Residues Lys170 and Ile196 each contribute to the FMN site. Residue 197-198 (NT) coordinates substrate. FMN contacts are provided by residues Gly222, 248 to 249 (GG), and 270 to 271 (GT).

It belongs to the dihydroorotate dehydrogenase family. Type 1 subfamily. As to quaternary structure, heterotetramer of 2 PyrK and 2 PyrD type B subunits. Requires FMN as cofactor.

Its subcellular location is the cytoplasm. The enzyme catalyses (S)-dihydroorotate + NAD(+) = orotate + NADH + H(+). It participates in pyrimidine metabolism; UMP biosynthesis via de novo pathway; orotate from (S)-dihydroorotate (NAD(+) route): step 1/1. Catalyzes the conversion of dihydroorotate to orotate with NAD(+) as electron acceptor. Cannot use fumarate as an electron acceptor. The sequence is that of Dihydroorotate dehydrogenase B (NAD(+)), catalytic subunit (pyrDB) from Lactococcus lactis subsp. cremoris (strain MG1363).